The sequence spans 429 residues: Serine--tRNA ligase (429 aa).

Residue 236–238 (TGE) coordinates L-serine. Residue 267 to 269 (RSE) coordinates ATP. Position 290 (E290) interacts with L-serine. 354-357 (EISS) is an ATP binding site. An L-serine-binding site is contributed by S390.

This sequence belongs to the class-II aminoacyl-tRNA synthetase family. Type-1 seryl-tRNA synthetase subfamily. As to quaternary structure, homodimer. The tRNA molecule binds across the dimer.

It is found in the cytoplasm. The catalysed reaction is tRNA(Ser) + L-serine + ATP = L-seryl-tRNA(Ser) + AMP + diphosphate + H(+). It carries out the reaction tRNA(Sec) + L-serine + ATP = L-seryl-tRNA(Sec) + AMP + diphosphate + H(+). Its pathway is aminoacyl-tRNA biosynthesis; selenocysteinyl-tRNA(Sec) biosynthesis; L-seryl-tRNA(Sec) from L-serine and tRNA(Sec): step 1/1. Functionally, catalyzes the attachment of serine to tRNA(Ser). Is also able to aminoacylate tRNA(Sec) with serine, to form the misacylated tRNA L-seryl-tRNA(Sec), which will be further converted into selenocysteinyl-tRNA(Sec). The sequence is that of Serine--tRNA ligase from Vesicomyosocius okutanii subsp. Calyptogena okutanii (strain HA).